We begin with the raw amino-acid sequence, 158 residues long: NAD(P)H-quinone oxidoreductase subunit J, chloroplastic (158 aa).

This sequence belongs to the complex I 30 kDa subunit family. NDH is composed of at least 16 different subunits, 5 of which are encoded in the nucleus.

It is found in the plastid. The protein localises to the chloroplast thylakoid membrane. It carries out the reaction a plastoquinone + NADH + (n+1) H(+)(in) = a plastoquinol + NAD(+) + n H(+)(out). The enzyme catalyses a plastoquinone + NADPH + (n+1) H(+)(in) = a plastoquinol + NADP(+) + n H(+)(out). Functionally, NDH shuttles electrons from NAD(P)H:plastoquinone, via FMN and iron-sulfur (Fe-S) centers, to quinones in the photosynthetic chain and possibly in a chloroplast respiratory chain. The immediate electron acceptor for the enzyme in this species is believed to be plastoquinone. Couples the redox reaction to proton translocation, and thus conserves the redox energy in a proton gradient. The chain is NAD(P)H-quinone oxidoreductase subunit J, chloroplastic from Nandina domestica (Heavenly bamboo).